Reading from the N-terminus, the 525-residue chain is MVQPADIDVPETPARPVLVVDFGAQYAQLIARRVREARVFSEVIPHTASIEEIRARQPVALVLSGGPASVYADGAPKLDPALLDLGVPVLGICYGFQAMAQALGGIVAHTGTREYGRTELKVLGGKLHSDLPEVQPVWMSHGDAVTAAPDGFDVVASSAGAPVAAFEAFDRRLAGVQYHPEVMHTPHGQQVLSRFLHDFAGLGAQWTPANIANALIEQVRTQIGDGHAICGLSGGVDSAVAAALVQRAIGDRLTCVFVDHGLLRAGERAQVQRDFVAATGANLVTVDAAETFLEALSGVSAPEGKRKIIGRQFIRAFEGAVRDVLDGKTAEFLVQGTLYPDVVESGGGSGTANIKSHHNVGGLPDDLKFTLVEPLRLLFKDEVRAVGRELGLPEEIVARQPFPGPGLGIRIVGEVTAKRLDTLRHADSIVREELTAAGLDNQIWQCPVVLLADVRSVGVQGDGRTYGHPIVLRPVSSEDAMTADWTRVPYEVLERISTRITNEVAEVNRVVLDITSKPPATIEWE.

The Glutamine amidotransferase type-1 domain occupies 16–205; the sequence is PVLVVDFGAQ…LHDFAGLGAQ (190 aa). Residue C93 is the Nucleophile of the active site. Catalysis depends on residues H179 and E181. Residues 206 to 399 enclose the GMPS ATP-PPase domain; sequence WTPANIANAL…LGLPEEIVAR (194 aa). Residue 233–239 participates in ATP binding; the sequence is SGGVDSA.

As to quaternary structure, homodimer.

The catalysed reaction is XMP + L-glutamine + ATP + H2O = GMP + L-glutamate + AMP + diphosphate + 2 H(+). The protein operates within purine metabolism; GMP biosynthesis; GMP from XMP (L-Gln route): step 1/1. In terms of biological role, catalyzes the synthesis of GMP from XMP. The polypeptide is GMP synthase [glutamine-hydrolyzing] (Mycobacterium bovis (strain BCG / Pasteur 1173P2)).